Reading from the N-terminus, the 169-residue chain is Probable glutathione peroxidase 2 (169 aa).

C41 is a catalytic residue.

Belongs to the glutathione peroxidase family. As to quaternary structure, interacts with DJ1A. In terms of tissue distribution, expressed in leaves, stems, flowers, green siliques and roots.

Its subcellular location is the cytoplasm. It localises to the cytosol. The protein localises to the nucleus. The enzyme catalyses 2 glutathione + H2O2 = glutathione disulfide + 2 H2O. Its function is as follows. May constitute a glutathione peroxidase-like protective system against oxidative stresses. The protein is Probable glutathione peroxidase 2 (GPX2) of Arabidopsis thaliana (Mouse-ear cress).